A 1107-amino-acid polypeptide reads, in one-letter code: Lon protease homolog, mitochondrial (1107 aa).

Residues 1 to 31 (MLSRQRIPRILASRTSLAHSIRSFTSTTSSI) constitute a mitochondrion transit peptide. Disordered stretches follow at residues 32 to 152 (RPVA…PGDK) and 273 to 329 (PEAA…PYEP). Residues 51-60 (TNLSSFSTYT) are compositionally biased toward polar residues. Positions 80 to 101 (EEERKANVEHAEAEAKEAESKQ) are enriched in basic and acidic residues. The segment covering 122-141 (GAAGGSSAGSGSGADGGSGD) has biased composition (gly residues). A compositionally biased stretch (basic and acidic residues) spans 142 to 152 (GGKRGRKPGDK). A Lon N-terminal domain is found at 166–441 (VMAIPIAKRP…KALLVLKKEH (276 aa)). Position 594–601 (594–601 (GPPGVGKT)) interacts with ATP. The segment at 808–858 (PESEALTEEGKAAQEETEKKKSEEAASGETSSPKAATEASEKETTEKPRVA) is disordered. The segment covering 815–831 (EEGKAAQEETEKKKSEE) has biased composition (basic and acidic residues). A compositionally biased stretch (low complexity) spans 832-845 (AASGETSSPKAATE). A compositionally biased stretch (basic and acidic residues) spans 846–856 (ASEKETTEKPR). The region spanning 891–1077 (VTPPGVTMGL…SEVFDLIFPK (187 aa)) is the Lon proteolytic domain. Active-site residues include serine 983 and lysine 1026. Residues 1085 to 1107 (KSRIIEDDKSEKEESKKKNDDDE) are disordered.

The protein belongs to the peptidase S16 family. In terms of assembly, homohexamer or homoheptamer. Organized in a ring with a central cavity.

It localises to the mitochondrion matrix. The enzyme catalyses Hydrolysis of proteins in presence of ATP.. ATP-dependent serine protease that mediates the selective degradation of misfolded, unassembled or oxidatively damaged polypeptides as well as certain short-lived regulatory proteins in the mitochondrial matrix. May also have a chaperone function in the assembly of inner membrane protein complexes. Participates in the regulation of mitochondrial gene expression and in the maintenance of the integrity of the mitochondrial genome. Binds to mitochondrial DNA in a site-specific manner. The protein is Lon protease homolog, mitochondrial (pim1) of Neurospora crassa (strain ATCC 24698 / 74-OR23-1A / CBS 708.71 / DSM 1257 / FGSC 987).